The following is a 356-amino-acid chain: sn-glycerol-3-phosphate import ATP-binding protein UgpC (356 aa).

In terms of domain architecture, ABC transporter spans 4 to 235; sequence LKLQAVTKSW…PASLFVASFI (232 aa). 37 to 44 lines the ATP pocket; sequence GPSGCGKS.

Belongs to the ABC transporter superfamily. sn-glycerol-3-phosphate importer (TC 3.A.1.1.3) family. In terms of assembly, the complex is composed of two ATP-binding proteins (UgpC), two transmembrane proteins (UgpA and UgpE) and a solute-binding protein (UgpB).

Its subcellular location is the cell inner membrane. It catalyses the reaction sn-glycerol 3-phosphate(out) + ATP + H2O = sn-glycerol 3-phosphate(in) + ADP + phosphate + H(+). In terms of biological role, part of the ABC transporter complex UgpBAEC involved in sn-glycerol-3-phosphate (G3P) import. Responsible for energy coupling to the transport system. In Shigella boydii serotype 4 (strain Sb227), this protein is sn-glycerol-3-phosphate import ATP-binding protein UgpC.